The primary structure comprises 387 residues: Hydroxycarboxylic acid receptor 3 (387 aa).

Over 1–28 (MNRHHLQDHFLEIDKKNCCVFRDDFIAK) the chain is Extracellular. Residues 29 to 50 (VLPPVLGLEFIFGLLGNGLALW) traverse the membrane as a helical segment. Topologically, residues 51-63 (IFCFHLKSWKSSR) are cytoplasmic. Residues 64-85 (IFLFNLAVADFLLIICLPFVMD) traverse the membrane as a helical segment. Residues 86–102 (YYVRRSDWKFGDIPCRL) are Extracellular-facing. Cys100 and Cys177 are joined by a disulfide. The chain crosses the membrane as a helical span at residues 103–123 (VLFMFAMNRQGSIIFLTVVAV). At 124 to 142 (DRYFRVVHPHHALNKISNW) the chain is on the cytoplasmic side. Residues 143–163 (TAAIISCLLWGITVGLTVHLL) form a helical membrane-spanning segment. Residues 164-194 (KKKLLIQNGTANVCISFSICHTFRWHEAMFL) are Extracellular-facing. Residues 195 to 209 (LEFFLPLGIILFCSA) form a helical membrane-spanning segment. The Cytoplasmic portion of the chain corresponds to 210 to 236 (RIIWSLRQRQMDRHAKIKRAITFIMVV). A helical transmembrane segment spans residues 237-256 (AIVFVICFLPSVVVRIHIFW). Residues 257-273 (LLHTSGTQNCEVYRSVD) are Extracellular-facing. A helical membrane pass occupies residues 274–298 (LAFFITLSFTYMNSMLDPVVYYFSS). At 299-387 (PSFPNFFSTL…LEKQLGCCIE (89 aa)) the chain is on the cytoplasmic side. The segment at 319–343 (GEPDNNRSTSVELTGDPNKTRGAPE) is disordered.

It belongs to the G-protein coupled receptor 1 family. In terms of tissue distribution, expression largely restricted to adipose tissue and spleen.

It localises to the cell membrane. Its function is as follows. Receptor for 3-OH-octanoid acid mediates a negative feedback regulation of adipocyte lipolysis to counteract prolipolytic influences under conditions of physiological or pathological increases in beta-oxidation rates. Acts as a low affinity receptor for nicotinic acid. This pharmacological effect requires nicotinic acid doses that are much higher than those provided by a normal diet. This Homo sapiens (Human) protein is Hydroxycarboxylic acid receptor 3 (HCAR3).